The primary structure comprises 578 residues: Acyl-coenzyme A synthetase ACSM5, mitochondrial (578 aa).

The N-terminal 22 residues, 1 to 22 (MRLWLRGLVYQARRSSWGVFRI), are a transit peptide targeting the mitochondrion. Lys-96 is subject to N6-acetyllysine; alternate. Lys-96 is modified (N6-succinyllysine; alternate). At Lys-151 the chain carries N6-acetyllysine. 229-237 (TSGTTGTPK) contributes to the ATP binding site. Lys-335 carries the post-translational modification N6-acetyllysine. ATP is bound by residues 367–372 (EGYGQS), Asp-454, Arg-469, and Lys-565.

It belongs to the ATP-dependent AMP-binding enzyme family. Requires Mg(2+) as cofactor. Mn(2+) is required as a cofactor.

It is found in the mitochondrion matrix. The catalysed reaction is a medium-chain fatty acid + ATP + CoA = a medium-chain fatty acyl-CoA + AMP + diphosphate. Catalyzes the activation of fatty acids by CoA to produce an acyl-CoA, the first step in fatty acid metabolism. The sequence is that of Acyl-coenzyme A synthetase ACSM5, mitochondrial (Acsm5) from Rattus norvegicus (Rat).